We begin with the raw amino-acid sequence, 443 residues long: Protein UIP5 (443 aa).

A signal peptide spans 1-27 (MSRDVRAEKLAISLLILSLFLIFQLVA). Residues 28-398 (EIYLNNGDQY…LFKVVLTIWH (371 aa)) lie on the Perinuclear space side of the membrane. A helical membrane pass occupies residues 399-420 (YSEILLLIMGIYLFSACIRVFQ). Over 421–443 (RRFKKIRSRRKRAGSHSVGLLPM) the chain is Cytoplasmic.

The protein resides in the nucleus membrane. In Saccharomyces cerevisiae (strain ATCC 204508 / S288c) (Baker's yeast), this protein is Protein UIP5 (UIP5).